Consider the following 89-residue polypeptide: Acylphosphatase (89 aa).

The Acylphosphatase-like domain occupies 3–89; it reads HIHLQVFGRV…NQKLSDFRSI (87 aa). Catalysis depends on residues Arg18 and Asn36.

It belongs to the acylphosphatase family.

The enzyme catalyses an acyl phosphate + H2O = a carboxylate + phosphate + H(+). This chain is Acylphosphatase (acyP), found in Staphylococcus aureus (strain Mu3 / ATCC 700698).